The sequence spans 353 residues: MEKLDRLLERIEPASKDWEAKAWERLHAQIRPRDSLGRLEVIAARLAAIKRSLTPAVGRKIIFTMAGDHGVAAEGVSAYPQEVTAQMVGSFVRGWASINILAVHCGAAVRVVDCGVASDLPPDWPVLRRKLGKGTANIAVGPAMSREVAVRGLTIGAEIVQDAHLKEGYLLFGTGDMGIGNTTPSTAIIAALGGKPVRDLTGRGTGIDDVAFERKVRVIERALAVNRPDPNDPLGVLAGVGGFEIAALGGAVLGAAALRVPIICDGFIATAGALVACRLAPKAADYLFVSHRSREVGHTAMVDMLGMRPILDLDMRLGEGTGSALAMNIVEAAAKVLVECKTFEEAGVTDTGH.

The active-site Proton acceptor is the Glu-319.

Belongs to the CobT family.

The catalysed reaction is 5,6-dimethylbenzimidazole + nicotinate beta-D-ribonucleotide = alpha-ribazole 5'-phosphate + nicotinate + H(+). It functions in the pathway nucleoside biosynthesis; alpha-ribazole biosynthesis; alpha-ribazole from 5,6-dimethylbenzimidazole: step 1/2. Its function is as follows. Catalyzes the synthesis of alpha-ribazole-5'-phosphate from nicotinate mononucleotide (NAMN) and 5,6-dimethylbenzimidazole (DMB). In Syntrophobacter fumaroxidans (strain DSM 10017 / MPOB), this protein is Nicotinate-nucleotide--dimethylbenzimidazole phosphoribosyltransferase.